Here is a 242-residue protein sequence, read N- to C-terminus: Beta-carotene ketolase (242 aa).

It catalyses the reaction all-trans-beta-carotene + 2 AH2 + 2 O2 = echinenone + 2 A + 3 H2O. The enzyme catalyses echinenone + 2 AH2 + 2 O2 = canthaxanthin + 2 A + 3 H2O. The protein operates within carotenoid biosynthesis; astaxanthin biosynthesis. Functionally, converts beta-carotene to canthaxanthin via echinenone. The polypeptide is Beta-carotene ketolase (Paracoccus sp. (strain PC1) (Alcaligenes sp. (strain PC1))).